Consider the following 440-residue polypeptide: MKLVLLLPWACCCLCGSALATGFLYPFPAAALQQHGYPEQGAGSPGNGYSSRRHWCHHTVTRTVSCQVQNGSETVVQRVYQSCRWPGPCANLVSYRTLIRPTYRVSYRTVTALEWRCCPGFTGSNCEEECMNCTRLSDMSERLTTLEAKVLLLEAAEQPSGPDNDLPPPQSTPPTWNEDFLPDAIPIAHPGPRRRRPTGPAGPPGQMGPPGPAGPPGSKGEQGQTGEKGPVGPPGLLGPPGPRGLPGEMGRPGPPGPPGPAGSPGLLPNTPQGVLYSLQTPTDKENGDSQLNPAVVDTVLTGIPGPRGPPGPPGPPGPHGPPGPPGAPGSQGLVDERVVARPSGEPSVKEEEDKASAAEGEGVQQLREALKILAERVLILEHMIGVHDPLASPEGGSGQDAALRANLKMKRGGPRPDGILAALLGPDPAQKSADQAGDRK.

Positions Met1–Ala20 are cleaved as a signal peptide. Positions Arg52–Glu128 constitute an EMI domain. 3 cysteine pairs are disulfide-bonded: Cys56/Cys118, Cys83/Cys89, and Cys117/Cys126. An N-linked (GlcNAc...) asparagine glycan is attached at Asn70. Asn132 carries an N-linked (GlcNAc...) asparagine glycan. Disordered stretches follow at residues Glu157 to Gly362 and Leu390 to Lys440. The Collagen-like 1 domain occupies Gly199–Leu267. Composition is skewed to pro residues over residues Pro200 to Pro215, Val231 to Arg243, and Pro252 to Ala261. The segment covering Asn269–Pro281 has biased composition (polar residues). The Collagen-like 2 domain occupies Gly302 to Val334. The span at Pro306 to Ala327 shows a compositional bias: pro residues. The segment covering Ser347 to Ser356 has biased composition (basic and acidic residues).

Homotrimer or heterotrimer. In terms of processing, hydroxylated on proline residues. N-glycosylated. As to expression, specifically expressed in the testis and ovary in adult tissues.

The protein localises to the secreted. Its subcellular location is the extracellular space. The protein resides in the extracellular matrix. In Mus musculus (Mouse), this protein is Collagen alpha-1(XXVI) chain (Col26a1).